The chain runs to 320 residues: Tyrosine phosphatase H3 (320 aa).

One can recognise a Tyrosine-protein phosphatase domain in the interval 22–309; it reads NFWEFVRLEH…AFCYKAVRYA (288 aa). The Phosphocysteine intermediate role is filled by Cys-250.

This sequence belongs to the protein-tyrosine phosphatase family.

It carries out the reaction O-phospho-L-tyrosyl-[protein] + H2O = L-tyrosyl-[protein] + phosphate. Its function is as follows. Suppresses host immune cell adhesion and phagocytosis. The protein is Tyrosine phosphatase H3 (H3) of Microplitis demolitor (Parasitoid wasp).